A 270-amino-acid chain; its full sequence is Acyl-[acyl-carrier-protein]--UDP-N-acetylglucosamine O-acyltransferase (270 aa).

Belongs to the transferase hexapeptide repeat family. LpxA subfamily. In terms of assembly, homotrimer.

Its subcellular location is the cytoplasm. The enzyme catalyses a (3R)-hydroxyacyl-[ACP] + UDP-N-acetyl-alpha-D-glucosamine = a UDP-3-O-[(3R)-3-hydroxyacyl]-N-acetyl-alpha-D-glucosamine + holo-[ACP]. It participates in glycolipid biosynthesis; lipid IV(A) biosynthesis; lipid IV(A) from (3R)-3-hydroxytetradecanoyl-[acyl-carrier-protein] and UDP-N-acetyl-alpha-D-glucosamine: step 1/6. Involved in the biosynthesis of lipid A, a phosphorylated glycolipid that anchors the lipopolysaccharide to the outer membrane of the cell. In Helicobacter acinonychis (strain Sheeba), this protein is Acyl-[acyl-carrier-protein]--UDP-N-acetylglucosamine O-acyltransferase.